We begin with the raw amino-acid sequence, 310 residues long: N-acetylmuramic acid 6-phosphate etherase (310 aa).

The SIS domain occupies 64-227; it reads ITSRLKSNGR…STSVMIKLGK (164 aa). The active-site Proton donor is the Glu-92. The active site involves Glu-123.

The protein belongs to the GCKR-like family. MurNAc-6-P etherase subfamily. As to quaternary structure, homodimer.

It carries out the reaction N-acetyl-D-muramate 6-phosphate + H2O = N-acetyl-D-glucosamine 6-phosphate + (R)-lactate. The protein operates within amino-sugar metabolism; N-acetylmuramate degradation. Its function is as follows. Specifically catalyzes the cleavage of the D-lactyl ether substituent of MurNAc 6-phosphate, producing GlcNAc 6-phosphate and D-lactate. The polypeptide is N-acetylmuramic acid 6-phosphate etherase (Prochlorococcus marinus (strain NATL2A)).